The chain runs to 344 residues: Cycloartenol-C-24-methyltransferase 1 (344 aa).

This sequence belongs to the class I-like SAM-binding methyltransferase superfamily. Erg6/SMT family.

The catalysed reaction is zymosterol + S-adenosyl-L-methionine = fecosterol + S-adenosyl-L-homocysteine + H(+). It participates in steroid biosynthesis; sterol biosynthesis. Its function is as follows. Catalyzes the methyl transfer from S-adenosyl-methionine to the C-24 of cycloartenol to form 24-methylene cycloartenol. The polypeptide is Cycloartenol-C-24-methyltransferase 1 (Smt1-1) (Oryza sativa subsp. japonica (Rice)).